Here is a 159-residue protein sequence, read N- to C-terminus: NAD(P)H-quinone oxidoreductase subunit I, chloroplastic (159 aa).

4Fe-4S ferredoxin-type domains are found at residues 55-84 and 95-124; these read GRIH…VDWN and KNYS…MTEE. Cysteine 64, cysteine 67, cysteine 70, cysteine 74, cysteine 104, cysteine 107, cysteine 110, and cysteine 114 together coordinate [4Fe-4S] cluster.

The protein belongs to the complex I 23 kDa subunit family. As to quaternary structure, NDH is composed of at least 16 different subunits, 5 of which are encoded in the nucleus. Requires [4Fe-4S] cluster as cofactor.

Its subcellular location is the plastid. The protein resides in the chloroplast thylakoid membrane. The catalysed reaction is a plastoquinone + NADH + (n+1) H(+)(in) = a plastoquinol + NAD(+) + n H(+)(out). The enzyme catalyses a plastoquinone + NADPH + (n+1) H(+)(in) = a plastoquinol + NADP(+) + n H(+)(out). NDH shuttles electrons from NAD(P)H:plastoquinone, via FMN and iron-sulfur (Fe-S) centers, to quinones in the photosynthetic chain and possibly in a chloroplast respiratory chain. The immediate electron acceptor for the enzyme in this species is believed to be plastoquinone. Couples the redox reaction to proton translocation, and thus conserves the redox energy in a proton gradient. In Chara vulgaris (Common stonewort), this protein is NAD(P)H-quinone oxidoreductase subunit I, chloroplastic.